Consider the following 326-residue polypeptide: MLKTYHIALACVILAVVVLLFGGESLSLEEWQEVCLNVKNHFLHNEELSSLSIIILEIRLPRVILALLVGASLSGSGVVMQTIFRNPLVDPFLLGISSGAMLGVAMAIAVVESNIAILAFFGAILASLAVLAMNRVLGNSVLSLVLSGVVLSAFLSALAGAIKFFVIPQKAQAIVVWLLGSLSLSSYKDCLIAFIGLSLGFIPLFLLRWRINLLSLSDAQSLSLGINPVLLRSLCLVCVSVASALAVSVSGTIGWIGLVIPHVARLFFGANLQKLLLSSLLMGAFFLLLADVVAKTITPYDLPVGIATSVLGAPFFLWLLFRTRGV.

Transmembrane regions (helical) follow at residues 7 to 27 (IALA…ESLS), 64 to 84 (ILAL…QTIF), 91 to 111 (PFLL…IAVV), 113 to 133 (SNIA…VLAM), 142 to 162 (LSLV…AGAI), 164 to 184 (FFVI…SLSL), 187 to 207 (YKDC…LFLL), 241 to 261 (VASA…LVIP), 275 to 295 (LLLS…VVAK), and 301 to 321 (DLPV…WLLF).

This sequence belongs to the binding-protein-dependent transport system permease family. FecCD subfamily.

It is found in the cell inner membrane. Its function is as follows. Part of a binding-protein-dependent transport system for an iron chelatin; probably responsible for the translocation of the substrate across the membrane. The chain is Probable iron chelatin transport system permease protein HP_0889 from Helicobacter pylori (strain ATCC 700392 / 26695) (Campylobacter pylori).